A 384-amino-acid polypeptide reads, in one-letter code: Guanine nucleotide-binding protein alpha-1 subunit (384 aa).

Residues 1-22 (MGSLCSRNKHYSQADDEENTQT) form a disordered region. G2 carries N-myristoyl glycine lipidation. C5 is lipidated: S-palmitoyl cysteine. Residues 38 to 384 (HIQKLLLLGA…RRNLFEAGLL (347 aa)) enclose the G-alpha domain. Residues 41–54 (KLLLLGAGDSGKST) form a G1 motif region. Residues D49, S50, G51, K52, S53, T54, D163, L188, T194, G222, N288, K289, D291, and A356 each contribute to the GTP site. Residue S53 participates in Mg(2+) binding. Positions 186–194 (DVLFARIRT) are G2 motif. T194 contributes to the Mg(2+) binding site. Residues 215 to 224 (YRLFDVGGQR) are G3 motif. The interval 284–291 (MLFLNKFD) is G4 motif. The G5 motif stretch occupies residues 354–359 (TTALDQ).

It belongs to the G-alpha family. In terms of assembly, g proteins are composed of 3 units; alpha, beta and gamma. The alpha chain contains the guanine nucleotide binding site. Requires Mg(2+) as cofactor.

Its function is as follows. Guanine nucleotide-binding proteins (G proteins) are involved as modulators or transducers in various transmembrane signaling systems. In Solanum lycopersicum (Tomato), this protein is Guanine nucleotide-binding protein alpha-1 subunit (GPA1).